A 361-amino-acid polypeptide reads, in one-letter code: DNA replication and repair protein RecF (361 aa).

30-37 provides a ligand contact to ATP; it reads GPNGSGKT.

The protein belongs to the RecF family.

The protein localises to the cytoplasm. In terms of biological role, the RecF protein is involved in DNA metabolism; it is required for DNA replication and normal SOS inducibility. RecF binds preferentially to single-stranded, linear DNA. It also seems to bind ATP. The polypeptide is DNA replication and repair protein RecF (Erwinia tasmaniensis (strain DSM 17950 / CFBP 7177 / CIP 109463 / NCPPB 4357 / Et1/99)).